The sequence spans 320 residues: Porphobilinogen deaminase (320 aa).

The residue at position 248 (C248) is an S-(dipyrrolylmethanemethyl)cysteine.

Belongs to the HMBS family. In terms of assembly, monomer. The cofactor is dipyrromethane.

The catalysed reaction is 4 porphobilinogen + H2O = hydroxymethylbilane + 4 NH4(+). The protein operates within porphyrin-containing compound metabolism; protoporphyrin-IX biosynthesis; coproporphyrinogen-III from 5-aminolevulinate: step 2/4. It participates in porphyrin-containing compound metabolism; chlorophyll biosynthesis. Its function is as follows. Tetrapolymerization of the monopyrrole PBG into the hydroxymethylbilane pre-uroporphyrinogen in several discrete steps. The protein is Porphobilinogen deaminase of Synechococcus elongatus (strain ATCC 33912 / PCC 7942 / FACHB-805) (Anacystis nidulans R2).